We begin with the raw amino-acid sequence, 2376 residues long: MAG2-interacting protein 2 (2376 aa).

As to quaternary structure, forms a complex with MAG2, ZW10/MIP1 and MIP3 on the endoplasmic reticulum.

It localises to the endoplasmic reticulum membrane. In terms of biological role, required for proper maturation of seed storage proteins. Forms a complex with MAG2, ZW10/MIP1 and MIP3 on the endoplasmic reticulum that may be responsible for efficient transport of seed storage proteins. This chain is MAG2-interacting protein 2, found in Arabidopsis thaliana (Mouse-ear cress).